A 618-amino-acid chain; its full sequence is Probable peptide transporter ptr2 (618 aa).

At serine 22 the chain carries Phosphoserine. Phosphotyrosine is present on tyrosine 23. Phosphoserine occurs at positions 25 and 33. The interval 26-50 is disordered; it reads KEKKADGSATINTADEQSSTDELQK. Positions 34–50 are enriched in polar residues; sequence ATINTADEQSSTDELQK. Threonine 35 carries the phosphothreonine modification. Serine 44 carries the post-translational modification Phosphoserine. Phosphothreonine is present on threonine 45. Serine 51 and serine 53 each carry phosphoserine. Residue threonine 54 is modified to Phosphothreonine. 10 helical membrane-spanning segments follow: residues 131–151, 161–181, 187–207, 247–267, 273–293, 400–420, 430–450, 475–495, 510–530, and 541–561; these read GLSN…ALIA, IVCS…TAIP, GKSM…TGGI, YMIF…TTSL, FVYA…ILAV, FDSI…YPLL, ILRI…AAVL, VWIQ…ASIT, SIIT…SICI, and WMYT…WVCF. Serine 594 is subject to Phosphoserine. Phosphothreonine is present on threonine 618.

This sequence belongs to the major facilitator superfamily. Proton-dependent oligopeptide transporter (POT/PTR) (TC 2.A.17) family.

The protein localises to the membrane. Its function is as follows. Uptake of small peptides. In Schizosaccharomyces pombe (strain 972 / ATCC 24843) (Fission yeast), this protein is Probable peptide transporter ptr2 (ptr2).